The primary structure comprises 237 residues: tRNA1(Val) (adenine(37)-N6)-methyltransferase (237 aa).

This sequence belongs to the methyltransferase superfamily. tRNA (adenine-N(6)-)-methyltransferase family.

It localises to the cytoplasm. The catalysed reaction is adenosine(37) in tRNA1(Val) + S-adenosyl-L-methionine = N(6)-methyladenosine(37) in tRNA1(Val) + S-adenosyl-L-homocysteine + H(+). Specifically methylates the adenine in position 37 of tRNA(1)(Val) (anticodon cmo5UAC). The chain is tRNA1(Val) (adenine(37)-N6)-methyltransferase from Bacteroides fragilis (strain ATCC 25285 / DSM 2151 / CCUG 4856 / JCM 11019 / LMG 10263 / NCTC 9343 / Onslow / VPI 2553 / EN-2).